A 315-amino-acid chain; its full sequence is Ornithine carbamoyltransferase (315 aa).

Carbamoyl phosphate contacts are provided by residues serine 57 to threonine 60, glutamine 84, arginine 108, and histidine 135 to glutamine 138. L-ornithine is bound by residues asparagine 166, aspartate 230, and serine 234–methionine 235. Residues cysteine 270–leucine 271 and arginine 298 contribute to the carbamoyl phosphate site.

It belongs to the aspartate/ornithine carbamoyltransferase superfamily. OTCase family.

Its subcellular location is the cytoplasm. It carries out the reaction carbamoyl phosphate + L-ornithine = L-citrulline + phosphate + H(+). The protein operates within amino-acid biosynthesis; L-arginine biosynthesis; L-arginine from L-ornithine and carbamoyl phosphate: step 1/3. Its function is as follows. Reversibly catalyzes the transfer of the carbamoyl group from carbamoyl phosphate (CP) to the N(epsilon) atom of ornithine (ORN) to produce L-citrulline. This is Ornithine carbamoyltransferase from Thermococcus kodakarensis (strain ATCC BAA-918 / JCM 12380 / KOD1) (Pyrococcus kodakaraensis (strain KOD1)).